We begin with the raw amino-acid sequence, 384 residues long: Putative 8-amino-7-oxononanoate synthase (384 aa).

Arg-22 serves as a coordination point for substrate. 109–110 (GY) lines the pyridoxal 5'-phosphate pocket. His-134 lines the substrate pocket. Residues Ser-182, 207–210 (DDAH), and 236–239 (TLSK) each bind pyridoxal 5'-phosphate. Residue Lys-239 is modified to N6-(pyridoxal phosphate)lysine. A substrate-binding site is contributed by Thr-348.

This sequence belongs to the class-II pyridoxal-phosphate-dependent aminotransferase family. BioF subfamily. In terms of assembly, homodimer. Pyridoxal 5'-phosphate serves as cofactor.

It catalyses the reaction 6-carboxyhexanoyl-[ACP] + L-alanine + H(+) = (8S)-8-amino-7-oxononanoate + holo-[ACP] + CO2. Its pathway is cofactor biosynthesis; biotin biosynthesis. Functionally, catalyzes the decarboxylative condensation of pimeloyl-[acyl-carrier protein] and L-alanine to produce 8-amino-7-oxononanoate (AON), [acyl-carrier protein], and carbon dioxide. This is Putative 8-amino-7-oxononanoate synthase (bioF) from Caulobacter vibrioides (strain ATCC 19089 / CIP 103742 / CB 15) (Caulobacter crescentus).